The chain runs to 205 residues: Type III pantothenate kinase (205 aa).

5–12 contacts ATP; the sequence is DIGNTTYH. Residues tyrosine 68 and 72–75 each bind substrate; that span reads GIDR. Residue aspartate 74 is the Proton acceptor of the active site. Aspartate 89 contacts K(+). Serine 92 contacts ATP. Serine 144 provides a ligand contact to substrate.

It belongs to the type III pantothenate kinase family. As to quaternary structure, homodimer. NH4(+) serves as cofactor. The cofactor is K(+).

The protein localises to the cytoplasm. It carries out the reaction (R)-pantothenate + ATP = (R)-4'-phosphopantothenate + ADP + H(+). The protein operates within cofactor biosynthesis; coenzyme A biosynthesis; CoA from (R)-pantothenate: step 1/5. In terms of biological role, catalyzes the phosphorylation of pantothenate (Pan), the first step in CoA biosynthesis. This is Type III pantothenate kinase from Sulfurimonas denitrificans (strain ATCC 33889 / DSM 1251) (Thiomicrospira denitrificans (strain ATCC 33889 / DSM 1251)).